Here is a 408-residue protein sequence, read N- to C-terminus: MANINENYLKLKAGYLFPEISKRVKTYSEKNPSAKIIRLGIGDVTLPIVPSVVDAMIAASKEMGTAGGFHGYGPEQGYSFLLKSIANNDYGSLGIKIDESEIFVSDGSKCDCGNIQEIFSTDAKIAVSDPVYPVYVDTNVMAGRTGEIGADGRYSNLIYMPATKENGFQPEIPKEKADIIYLCYPNNPTGTVTTKEALRAWVEYAKKNNSIILYDSAYEAFISEPGVPRSIYEVAGAKEVAIEFRSFSKTAGFTGLRCAYIVIPKELKGRTRGGEEVSINSLWSRRHTTKFNGVSYVTQKGAEACYSPQGKKEIQASIAYYMSNAAKIREGLKKAGYEVFGGVNAPYIWLKTSDNLSSWDFFDRLLDKAQVVGTPGSGFGPAGEGYFRLSAFGKKEDVEEAIARISFL.

Positions 15 and 42 each coordinate substrate. Pyridoxal 5'-phosphate is bound by residues Tyr72, 108–109, Tyr132, Asn187, Tyr218, and 246–248; these read SK and SFS. The substrate site is built by Lys109, Tyr132, and Asn187. N6-(pyridoxal phosphate)lysine is present on Lys249. 2 residues coordinate pyridoxal 5'-phosphate: Arg257 and Asn292. Substrate-binding residues include Asn292 and Arg388.

This sequence belongs to the class-I pyridoxal-phosphate-dependent aminotransferase family. LL-diaminopimelate aminotransferase subfamily. Homodimer. Requires pyridoxal 5'-phosphate as cofactor.

It carries out the reaction (2S,6S)-2,6-diaminopimelate + 2-oxoglutarate = (S)-2,3,4,5-tetrahydrodipicolinate + L-glutamate + H2O + H(+). The protein operates within amino-acid biosynthesis; L-lysine biosynthesis via DAP pathway; LL-2,6-diaminopimelate from (S)-tetrahydrodipicolinate (aminotransferase route): step 1/1. Involved in the synthesis of meso-diaminopimelate (m-DAP or DL-DAP), required for both lysine and peptidoglycan biosynthesis. Catalyzes the direct conversion of tetrahydrodipicolinate to LL-diaminopimelate. This chain is LL-diaminopimelate aminotransferase, found in Leptospira borgpetersenii serovar Hardjo-bovis (strain JB197).